The sequence spans 377 residues: MKKVWIGIGIAVIVALFVGINIYRSAAPTSGSAGKEVQTGSVEENEISSTVMVPGTLKFSNEQYVFYEADKGTLEDIKVKEGDKVKKGTALVTYTNEQLSLEKEQNQLTSESNRLQIDQIQEKLKALDSKERELEKQVGKKEAEKQIESERTELQMQKKTAEIELKQTELQRQSLANRVSDLEVKSEIEGTVISVNQEAASKKSDIQEPVIHIGNPKDLVVSGKLSEYDTLKVKKGQKVTLTSDVIQGKTWKGTVSAVGLVPDQQESAAAQGTEQAVQYPLQVKIKGNLPEGKPGFKFIMNIETDKRKANTLPSKAVKKEDDQYYVYTVKDGKAKRVDVKIGEVTDDLTEIKEGLTQDDQVILNPSDQVTDGMEVKS.

A helical transmembrane segment spans residues Lys-3–Tyr-23. Residues Thr-95–Glu-187 adopt a coiled-coil conformation.

It belongs to the membrane fusion protein (MFP) (TC 8.A.1) family. As to quaternary structure, part of a complex composed of YknX, YknY and YknZ. The complex interacts with YknW.

The protein localises to the cell membrane. Functionally, part of an unusual four-component transporter, which is required for protection against the killing factor SdpC (sporulation-delaying protein). In Bacillus subtilis (strain 168), this protein is Putative efflux system component YknX (yknX).